Consider the following 505-residue polypeptide: 4-alpha-glucanotransferase (505 aa).

It belongs to the disproportionating enzyme family.

The protein resides in the cytoplasm. The catalysed reaction is Transfers a segment of a (1-&gt;4)-alpha-D-glucan to a new position in an acceptor, which may be glucose or a (1-&gt;4)-alpha-D-glucan.. This is 4-alpha-glucanotransferase (malQ) from Streptococcus pneumoniae serotype 4 (strain ATCC BAA-334 / TIGR4).